We begin with the raw amino-acid sequence, 355 residues long: Peptide chain release factor 1 (355 aa).

At Gln233 the chain carries N5-methylglutamine.

This sequence belongs to the prokaryotic/mitochondrial release factor family. Methylated by PrmC. Methylation increases the termination efficiency of RF1.

It localises to the cytoplasm. In terms of biological role, peptide chain release factor 1 directs the termination of translation in response to the peptide chain termination codons UAG and UAA. The protein is Peptide chain release factor 1 of Syntrophobacter fumaroxidans (strain DSM 10017 / MPOB).